The sequence spans 409 residues: Ligand-gated cation channel ZACN (409 aa).

Positions 1 to 18 (MAPRLLLLLLAFLRLGTT) are cleaved as a signal peptide. Topologically, residues 19 to 233 (GPLVQGRGFR…LRLQNTALKA (215 aa)) are extracellular. N-linked (GlcNAc...) asparagine glycans are attached at residues Asn-55 and Asn-99. Cysteines 157 and 171 form a disulfide. A helical membrane pass occupies residues 234-254 (IIALLVPGEALLLADMCGGLL). Over 255-265 (PLRATERIAYK) the chain is Cytoplasmic. Residues 266-286 (VTLLLGYLVFHSSLVQALPSS) traverse the membrane as a helical segment. Over 287 to 296 (SSCNPLLIYY) the chain is Extracellular. Residues 297–317 (FTVLLLLLFISTMETVLLAAL) form a helical membrane-spanning segment. Topologically, residues 318 to 365 (QARGHLSARSSPIPTPRGEQQDHGDLGPHPEEAPGVKESRSWAEAADH) are cytoplasmic. The disordered stretch occupies residues 325–354 (ARSSPIPTPRGEQQDHGDLGPHPEEAPGVK). Positions 336–354 (EQQDHGDLGPHPEEAPGVK) are enriched in basic and acidic residues. The chain crosses the membrane as a helical span at residues 366-386 (IFFLVYVVGVVCSQFFFIGFW). Topologically, residues 387–409 (MWATCKSDPAPGEAIPHGGQPRL) are extracellular.

Belongs to the ligand-gated ion channel (TC 1.A.9) family. In terms of processing, glycosylated.

The protein localises to the cell membrane. It carries out the reaction Na(+)(in) = Na(+)(out). It catalyses the reaction K(+)(in) = K(+)(out). Ligand-gated cation channel that allows the movement of sodium and potassium monoatomic cations across cell membranes when activated by zinc (Zn2+), copper (Cu2+), and changes in pH. Could also transport cesium. This is Ligand-gated cation channel ZACN from Canis lupus familiaris (Dog).